Reading from the N-terminus, the 101-residue chain is Small ribosomal subunit protein uS14 (101 aa).

This sequence belongs to the universal ribosomal protein uS14 family. In terms of assembly, part of the 30S ribosomal subunit. Contacts proteins S3 and S10.

In terms of biological role, binds 16S rRNA, required for the assembly of 30S particles and may also be responsible for determining the conformation of the 16S rRNA at the A site. The sequence is that of Small ribosomal subunit protein uS14 from Corynebacterium efficiens (strain DSM 44549 / YS-314 / AJ 12310 / JCM 11189 / NBRC 100395).